The sequence spans 93 residues: Small ribosomal subunit protein uS19 (93 aa).

The protein belongs to the universal ribosomal protein uS19 family.

In terms of biological role, protein S19 forms a complex with S13 that binds strongly to the 16S ribosomal RNA. This chain is Small ribosomal subunit protein uS19, found in Dehalococcoides mccartyi (strain ATCC BAA-2266 / KCTC 15142 / 195) (Dehalococcoides ethenogenes (strain 195)).